A 949-amino-acid chain; its full sequence is Zinc finger CCHC domain-containing protein 14 (949 aa).

Disordered stretches follow at residues 25–44 (SSLNGGGGHGGKGAPGPGGA), 59–92 (EAPVSSVSNSLENALHTSAHSTEESLPKRPLGKH), 200–221 (STSSPPQQLQSPSPGNPSLSKV), 236–262 (AGIPSSQSGAQHHGQHPAGSAAPLPHC), 355–457 (KEKS…DKEK), and 739–779 (PESS…PQPA). The segment covering 28 to 43 (NGGGGHGGKGAPGPGG) has biased composition (gly residues). Polar residues predominate over residues 61 to 78 (PVSSVSNSLENALHTSAH). Residues 200-219 (STSSPPQQLQSPSPGNPSLS) show a composition bias toward low complexity. Residues 395–411 (HAAELRVEVEQPHHQLP) show a composition bias toward basic and acidic residues. The span at 416–425 (SSEYSSSSSS) shows a compositional bias: low complexity. Over residues 431 to 457 (AREESSDSAEENDRRVEIHLESSDKEK) the composition is skewed to basic and acidic residues. The CCHC-type zinc-finger motif lies at 906-923 (LSCYNCGATGHRAQDCKQ).

This chain is Zinc finger CCHC domain-containing protein 14 (ZCCHC14), found in Homo sapiens (Human).